The primary structure comprises 555 residues: Glypican-6 (555 aa).

An N-terminal signal peptide occupies residues Met-1–Ala-23. The span at Pro-348–Pro-357 shows a compositional bias: low complexity. Residues Pro-348–Ala-376 form a disordered region. Ser-529 carries GPI-anchor amidated serine lipidation. A propeptide spans Ser-530–Arg-555 (removed in mature form).

It belongs to the glypican family.

It is found in the cell membrane. It localises to the secreted. Its subcellular location is the extracellular space. In terms of biological role, cell surface proteoglycan that bears heparan sulfate. Putative cell surface coreceptor for growth factors, extracellular matrix proteins, proteases and anti-proteases. Enhances migration and invasion of cancer cells through WNT5A signaling. In Pongo abelii (Sumatran orangutan), this protein is Glypican-6 (GPC6).